The following is a 345-amino-acid chain: MNAHTLVYSGVALACAAMLGSCASGAKEEAEKKAAEQRALLVESAHADRRLMEARIGAQESGADTQHPELFSQIQDVERQSTDAKIEGDLKKAAGVASEAADKYEILRNRVEVADLQSKIQTHQLAQYDGDSANAAEESWKKALELYETDSAQCLQSTVEALESYRKVAHEGFGRLLPDMKARAGAAKTDVGGLKVAVELRPQLEEADSQYQEAREAEEVNARAKAFSGYHRALEIYTELGKVVRLKKTEAEKALQSAKTKQKASSDLARSADKSAPLPENAQGFSKEPIEVEPLPNDRLNTTQADESAPIPISDTSSPSRVQSRGVEDGGRSPKSSMNEEGASR.

A signal peptide spans 1–21 (MNAHTLVYSGVALACAAMLGS). Cysteine 22 carries the N-palmitoyl cysteine lipid modification. Cysteine 22 is lipidated: S-diacylglycerol cysteine. The interval 256-345 (QSAKTKQKAS…SSMNEEGASR (90 aa)) is disordered. Residues 314–323 (SDTSSPSRVQ) show a composition bias toward polar residues.

The protein to T.phagedenis TmpA.

The protein resides in the cell membrane. In Treponema pallidum (strain Nichols), this protein is Treponemal membrane protein A (tmpA).